The following is a 195-amino-acid chain: Cytochrome b-245 light chain (195 aa).

Residues 2–7 (GQIEWA) are Cytoplasmic-facing. The helical transmembrane segment at 8–30 (MWANEQALASGLILITGGIVATA) threads the bilayer. Residues 31-35 (GRFTQ) are Extracellular-facing. A helical membrane pass occupies residues 36–53 (WYFGAYSIVAGVFVCLLE). Residues 54-69 (YPRGKRKKGSTMERWG) are Cytoplasmic-facing. An intramembrane segment occupies 70 to 80 (QKYMTAVVKLF). Residues 81–86 (GPFTRN) are Cytoplasmic-facing. Residues 87 to 104 (YYVRAVLHLLLSVPAGFL) traverse the membrane as a helical segment. Position 105 (L105) is a topological domain, extracellular. The helical transmembrane segment at 106 to 126 (ATILGTACLAIASGIYLLAAV) threads the bilayer. The Cytoplasmic segment spans residues 127-195 (RGEQWTPIEP…NPIPVTDEVV (69 aa)). Positions 134–195 (IEPKPRERPQ…NPIPVTDEVV (62 aa)) are disordered. T147 carries the phosphothreonine modification. K149 is covalently cross-linked (Glycyl lysine isopeptide (Lys-Gly) (interchain with G-Cter in ubiquitin)). Position 168 is a phosphoserine (S168).

The protein belongs to the p22phox family. As to quaternary structure, component of the phagocyte NADPH oxidase core complex/cytochrome b558 complex, composed of CYBB (heavy chain (beta)) and CYBA (light chain (alpha)). Component of the phagocyte NADPH oxidase complex composed of an obligatory core heterodimer formed by the membrane proteins CYBA and CYBB and the cytosolic regulatory subunits NCF1/p47-phox, NCF2/p67-phox, NCF4/p40-phox and the small GTPase RAC1 or RAC2. Interacts with NCF1 (via SH3 domain). Interacts with SH3PXD2A. Interacts with DUOX1, DUOX2 and TPO. Interacts with NOX4; this interaction mediates superoxide generation. Interacts with calprotectin (S100A8/9). Interacts with GBP7. Interacts with NOXO1. Forms a heterodimer with NOX3 and is essential for activity and cell membrane localization of NOX3. Interacts with NOX1. Post-translationally, phosphorylation at Thr-147 enhances NADPH oxidase activity by promoting NCF1/p47-phox binding. Ubiquitinated at Lys-149 likely by RNF145.

It localises to the cell membrane. Its function is as follows. Subunit of NADPH oxidase complexes that is required for the NADPH oxidase activity that generates, in various cell types, superoxide from molecular oxygen utilizing NADPH as an electron donor. Subunit of the phagocyte NADPH oxidase complex that mediates the transfer of electrons from cytosolic NADPH to O2 to produce the superoxide anion (O2(-)). In the activated complex, electrons are first transferred from NADPH to flavin adenine dinucleotide (FAD) and subsequently transferred via two heme molecules to molecular oxygen, producing superoxide through an outer-sphere reaction. Activation of the NADPH oxidase complex is initiated by the assembly of cytosolic subunits of the NADPH oxidase complex with the core NADPH oxidase complex to form a complex at the plasma membrane or phagosomal membrane. This activation process is initiated by phosphorylation dependent binding of the cytosolic NCF1/p47-phox subunit to the C-terminus of CYBA/p22-phox. Aassociates with NOX3 to form a functional NADPH oxidase constitutively generating superoxide. In Homo sapiens (Human), this protein is Cytochrome b-245 light chain.